A 682-amino-acid polypeptide reads, in one-letter code: MTDFLIAFGSQTGQAETIAKSLKEKAELIGLTPRLHALDENEKKFNLNEEKLCAIVVSSTGDGDAPDNCARFVRRINRNSLENEYLKNLDYVLLGLGDSNYSSYQTIPRKIDKQLTALGANRLFDRAEADDQVGLELEVEPWIEKFFATLASRFDISADKMNAITESSNLKLNQVKTEEEKKALLQKRIEDEESDDEGRGRVIGIDMLIPEHYDYPEISLLKGSQTLSNDENLRVPIAPQPFIVSSVSNRKLPEDTKLEWQNLCKMPGVVTKPFEVLVVSAEFVTDPFSKKIKTKRMITVDFGDHAAELQYEPGDAIYFCVPNPALEVNFILKRCGVLDIADQQCELSINPKTEKINAQIPGHVHKITTLRHMFTTCLDIRRAPGRPLIRVLAESTSDPNEKRRLLELCSAQGMKDFTDFVRTPGLSLADMLFAFPNVKPPVDRLIELLPRLIPRPYSMSSYENRKARLIYSEMEFPATDGRRHSRKGLATDWLNSLRIGDKVQVLGKEPARFRLPPLGMTKNSAGKLPLLMVGPGTGVSVFLSFLHFLRKLKQDSPSDFVDVPRVLFFGCRDSSVDAIYMSELEMFVSEGILTDLIICESEQKGERVQDGLRKYLDKVLPFLTASTESKIFICGDAKGMSKDVWQCFSDIVASDQGIPDLEAKKKLMDLKKSDQYIEDVWG.

Residues 4 to 147 form the Flavodoxin-like domain; that stretch reads FLIAFGSQTG…EVEPWIEKFF (144 aa). Residue 93–124 participates in FMN binding; sequence LLGLGDSNYSSYQTIPRKIDKQLTALGANRLF. Positions 271–516 constitute an FAD-binding FR-type domain; it reads TKPFEVLVVS…GKEPARFRLP (246 aa). Position 293 (Lys293) interacts with NADP(+). FAD contacts are provided by residues 455 to 458 and 488 to 491; these read RPYS and GLAT. NADP(+) contacts are provided by residues 607–609 and Asp643; that span reads RVQ. Residue Trp681 participates in FAD binding.

FAD is required as a cofactor. FMN serves as cofactor.

The catalysed reaction is 2 methylcob(III)alamin-[methionine synthase] + 2 S-adenosyl-L-homocysteine + NADP(+) + H(+) = 2 cob(II)alamin-[methionine synthase] + 2 S-adenosyl-L-methionine + NADPH. Functionally, involved in the reductive regeneration of cob(I)alamin cofactor required for the maintenance of methionine synthase in a functional state. In Caenorhabditis elegans, this protein is Methionine synthase reductase.